Consider the following 155-residue polypeptide: Ribonuclease H (155 aa).

One can recognise an RNase H type-1 domain in the interval Met1–Met142. The Mg(2+) site is built by Asp10, Glu48, Asp70, and Asp134.

This sequence belongs to the RNase H family. As to quaternary structure, monomer. It depends on Mg(2+) as a cofactor.

The protein localises to the cytoplasm. It carries out the reaction Endonucleolytic cleavage to 5'-phosphomonoester.. Its function is as follows. Endonuclease that specifically degrades the RNA of RNA-DNA hybrids. The polypeptide is Ribonuclease H (Salmonella paratyphi C (strain RKS4594)).